A 183-amino-acid chain; its full sequence is Hypoxanthine/guanine phosphoribosyltransferase (183 aa).

The protein belongs to the purine/pyrimidine phosphoribosyltransferase family. Archaeal HPRT subfamily. Homodimer.

It is found in the cytoplasm. It carries out the reaction IMP + diphosphate = hypoxanthine + 5-phospho-alpha-D-ribose 1-diphosphate. The enzyme catalyses GMP + diphosphate = guanine + 5-phospho-alpha-D-ribose 1-diphosphate. It participates in purine metabolism; IMP biosynthesis via salvage pathway; IMP from hypoxanthine: step 1/1. Its function is as follows. Catalyzes a salvage reaction resulting in the formation of IMP that is energically less costly than de novo synthesis. The sequence is that of Hypoxanthine/guanine phosphoribosyltransferase from Methanocaldococcus vulcanius (strain ATCC 700851 / DSM 12094 / M7) (Methanococcus vulcanius).